A 669-amino-acid polypeptide reads, in one-letter code: MKLKISFLPTFLIFLISLDSVTAQEICFSGFFKPNSTYDLNRRQILSTLSSNVTSHNGFFNSKFGQAPNRVFINGMCIPGTKPETCSDCIKGASDKISESCPNKTDAYTWPDCCMVRYSNVSFSGSLVMEPSETLYHTGDIEDTGTNLTVFDRIWEELMLRTITAASLSSSNGSSFGQKYFAAEVASLTTFQTMYAMMQCTPDVSSKDCEFCLKTSVGDYESCCRGKQGGAVIRPSCFVRWDLYPYAGAFENVTFPPPPPQSLPQPPVSLIPPPVSDRANTTIKGIIVAIVVPIIVILVSLVVLLVVCRRKKSYKTTEVQATDEITTTHSLQFSFKTIEAATDKFSDSNMIGRGGFGEVYRGKLSSGPEVAVKRLSKTSGQGAEEFKNEAVLVSKLQHKNLVRLLGFCLEGEEKILVYEFVPNKSLDYFLFDPAKQGELDWTRRYNIIGGIARGILYLHQDSRLTIIHRDLKASNILLDADMNPKIADFGMARIFGVDQSQANTRRIAGTFGYMSPEYAMRGHFSMKSDVYSFGVLVLEIISGKKNSSFYNIDDSGSNLVTHAWRLWRNGSPLELVDPTIGESYQSSEATRCIHIALLCVQEDPADRPLLPAIIMMLTSSTTTLHVPRAPGFCLSGRDLEQDGVEYTESTSRSIPGSINDASITEFYPR.

An N-terminal signal peptide occupies residues 1 to 23 (MKLKISFLPTFLIFLISLDSVTA). 2 Gnk2-homologous domains span residues 24 to 123 (QEIC…NVSF) and 133 to 246 (ETLY…LYPY). At 24 to 285 (QEICFSGFFK…SDRANTTIKG (262 aa)) the chain is on the extracellular side. N-linked (GlcNAc...) asparagine glycosylation is found at N35, N52, N103, N120, N147, N172, N252, and N280. A helical membrane pass occupies residues 286–306 (IIVAIVVPIIVILVSLVVLLV). The Cytoplasmic segment spans residues 307–669 (VCRRKKSYKT…DASITEFYPR (363 aa)). The 280-residue stretch at 345-624 (FSDSNMIGRG…MMLTSSTTTL (280 aa)) folds into the Protein kinase domain. ATP is bound by residues 351 to 359 (IGRGGFGEV) and K373. Y418 is modified (phosphotyrosine). D470 functions as the Proton acceptor in the catalytic mechanism. Position 474 is a phosphoserine (S474). At T510 the chain carries Phosphothreonine. Y518 bears the Phosphotyrosine mark.

Belongs to the protein kinase superfamily. Ser/Thr protein kinase family. CRK subfamily.

Its subcellular location is the membrane. It carries out the reaction L-seryl-[protein] + ATP = O-phospho-L-seryl-[protein] + ADP + H(+). It catalyses the reaction L-threonyl-[protein] + ATP = O-phospho-L-threonyl-[protein] + ADP + H(+). This is Cysteine-rich receptor-like protein kinase 34 from Arabidopsis thaliana (Mouse-ear cress).